A 435-amino-acid polypeptide reads, in one-letter code: Elongation factor 1-alpha (435 aa).

Residues 4-229 (KPHLNLIVIG…DQLEIPPKPV (226 aa)) form the tr-type G domain. The G1 stretch occupies residues 13–20 (GHVDHGKS). 13–20 (GHVDHGKS) contacts GTP. Residue Ser20 participates in Mg(2+) binding. A G2 region spans residues 69–73 (GVTIN). The G3 stretch occupies residues 90 to 93 (DAPG). Residues 90 to 94 (DAPGH) and 152 to 155 (NKMD) each bind GTP. A G4 region spans residues 152 to 155 (NKMD). Residues 193–195 (VAP) are G5.

Belongs to the TRAFAC class translation factor GTPase superfamily. Classic translation factor GTPase family. EF-Tu/EF-1A subfamily.

It is found in the cytoplasm. The enzyme catalyses GTP + H2O = GDP + phosphate + H(+). In terms of biological role, GTP hydrolase that promotes the GTP-dependent binding of aminoacyl-tRNA to the A-site of ribosomes during protein biosynthesis. This chain is Elongation factor 1-alpha, found in Sulfurisphaera tokodaii (strain DSM 16993 / JCM 10545 / NBRC 100140 / 7) (Sulfolobus tokodaii).